The primary structure comprises 1148 residues: Putative ATP-dependent RNA helicase rha-2 (1148 aa).

Residues 1–10 (MGKRKTKEDN) show a composition bias toward basic and acidic residues. Disordered stretches follow at residues 1–51 (MGKR…FAKE) and 101–163 (STKL…DAGN). Positions 138 to 160 (PTDDESSSEEEEEEEEGDNDIED) are enriched in acidic residues. The region spanning 246–412 (VEAINENLVT…KLFPLLTPKV (167 aa)) is the Helicase ATP-binding domain. An ATP-binding site is contributed by 259–266 (GETGSGKT). The DEAH box signature appears at 355–358 (DEAH). The 241-residue stretch at 463-703 (EVKQLITKLK…QLVLHLKSMN (241 aa)) folds into the Helicase C-terminal domain.

The protein belongs to the DEAD box helicase family. DEAH subfamily.

The catalysed reaction is ATP + H2O = ADP + phosphate + H(+). Its function is as follows. Probable ATP-binding RNA helicase. This chain is Putative ATP-dependent RNA helicase rha-2 (rha-2), found in Caenorhabditis elegans.